The primary structure comprises 535 residues: Probable lipid II flippase MurJ (535 aa).

12 helical membrane-spanning segments follow: residues 90 to 110 (VLFTVLLLLTIAMELSMPFIV), 131 to 151 (FATIMFPYLACMSLAAMMAGM), 159 to 179 (FAAAIAPVFLNFILIAVLAYA), 192 to 212 (DLSWGVLAAGLVQLAIVWVAV), 233 to 253 (LLVLALPAAITGGITQINLLI), 274 to 294 (IYQLPLGVVGIAVATVLLPEL), 316 to 336 (FTLFLTLPAAAALLVMSEPIV), 350 to 370 (TVVVGHILAIYGLGLPAFVLI), 388 to 408 (IFAGISVAVNVSLALTLFPSL), 413 to 433 (IATAEIVAGWVNALLLFATLV), 451 to 471 (LVIAAAIMAAALYVAVDWLAF), and 484 to 504 (LTLCGLIAAAMAIYFAVAFGI).

This sequence belongs to the MurJ/MviN family.

The protein resides in the cell inner membrane. It functions in the pathway cell wall biogenesis; peptidoglycan biosynthesis. In terms of biological role, involved in peptidoglycan biosynthesis. Transports lipid-linked peptidoglycan precursors from the inner to the outer leaflet of the cytoplasmic membrane. This chain is Probable lipid II flippase MurJ, found in Rhizobium meliloti (strain 1021) (Ensifer meliloti).